A 157-amino-acid polypeptide reads, in one-letter code: Mannose-specific lectin (157 aa).

Positions 1-19 form a signal peptide, or 23; in 70% of the molecules; sequence MAKASLLILAAIFLGVITP. Positions 24-132 constitute a Bulb-type lectin domain; that stretch reads DNILYSGETL…DRWATGTHTG (109 aa). Alpha-D-mannopyranose is bound by residues Gln-49, Asp-51, Asn-53, Tyr-57, Asp-60, Lys-61, Trp-64, Ala-65, Asn-67, Gln-80, Asp-82, Asn-84, Tyr-88, Ile-95, Trp-96, Asn-99, Asn-106, Gln-112, Asp-114, Asn-116, Tyr-120, and Trp-125. Cys-52 and Cys-75 are oxidised to a cystine. Residues 129–157 constitute a propeptide, removed in mature form; that stretch reads THTGLVGIPASPPSEKYPTAGKIKLVTAK.

In terms of assembly, homotetramer.

It localises to the secreted. In terms of biological role, mannose-specific lectin which binds alpha-D-linked mannose. Displays a high affinity for alpha-(1-3)-mannose oligomers. Displays antiviral activity and therefore may contribute to defense against infections. The chain is Mannose-specific lectin from Galanthus nivalis (Common snowdrop).